The sequence spans 201 residues: Recombination protein RecR (201 aa).

A C4-type zinc finger spans residues 60–75; it reads CKTCGNIDTQNPCTVC. The Toprim domain occupies 83 to 178; sequence SIIVVVADVA…KVTRLAHGVP (96 aa).

This sequence belongs to the RecR family.

Its function is as follows. May play a role in DNA repair. It seems to be involved in an RecBC-independent recombinational process of DNA repair. It may act with RecF and RecO. This is Recombination protein RecR from Rhodopseudomonas palustris (strain HaA2).